The following is a 668-amino-acid chain: Tyrosine-protein phosphatase non-receptor type ptp-2 (668 aa).

2 SH2 domains span residues 10–113 and 134–232; these read NFYY…KKPV and WWHG…EEPL. The Tyrosine-protein phosphatase domain occupies 264–580; the sequence is ISEEFDRLSQ…QFLYKALAFY (317 aa). Residue Cys-518 is the Phosphocysteine intermediate of the active site. Residues 603-668 are disordered; that stretch reads PRRLRPTPNA…SSTLLKSTKK (66 aa). Low complexity-rich tracts occupy residues 616–634 and 652–668; these read SSAR…SSRT and STSS…STKK.

This sequence belongs to the protein-tyrosine phosphatase family. Non-receptor class 2 subfamily. In terms of tissue distribution, expressed in embryonic cells, developing vulva, body wall muscles, head neurons and gonadal sheath cells.

It is found in the cytoplasm. It carries out the reaction O-phospho-L-tyrosyl-[protein] + H2O = L-tyrosyl-[protein] + phosphate. Its function is as follows. Involved in embryonic and larval development. Plays a role in oogenesis by regulating mpk-1 phosphorylation and oocyte maturation in response to major sperm protein (MSP). During the formation of neuromuscular junctions at the larval stage, negatively regulates membrane protrusion from body wall muscles probably downstream of receptor egl-15. Plays a role in fluid homeostasis probably downstream of receptor egl-15 and adapter soc-1. Promotes vulva induction and negatively regulates fertility probably downstream of receptor let-23. Negatively regulates daf-2-mediated repression of dauer formation. The chain is Tyrosine-protein phosphatase non-receptor type ptp-2 from Caenorhabditis elegans.